The chain runs to 306 residues: Ribonuclease Z (306 aa).

Residues His63, His65, Asp67, His68, His141, Asp208, and His266 each coordinate Zn(2+). Asp67 serves as the catalytic Proton acceptor.

The protein belongs to the RNase Z family. As to quaternary structure, homodimer. Requires Zn(2+) as cofactor.

It catalyses the reaction Endonucleolytic cleavage of RNA, removing extra 3' nucleotides from tRNA precursor, generating 3' termini of tRNAs. A 3'-hydroxy group is left at the tRNA terminus and a 5'-phosphoryl group is left at the trailer molecule.. Zinc phosphodiesterase, which displays some tRNA 3'-processing endonuclease activity. Probably involved in tRNA maturation, by removing a 3'-trailer from precursor tRNA. In Protochlamydia amoebophila (strain UWE25), this protein is Ribonuclease Z.